A 365-amino-acid polypeptide reads, in one-letter code: S-adenosylmethionine:tRNA ribosyltransferase-isomerase (365 aa).

It belongs to the QueA family. In terms of assembly, monomer.

It localises to the cytoplasm. The catalysed reaction is 7-aminomethyl-7-carbaguanosine(34) in tRNA + S-adenosyl-L-methionine = epoxyqueuosine(34) in tRNA + adenine + L-methionine + 2 H(+). Its pathway is tRNA modification; tRNA-queuosine biosynthesis. In terms of biological role, transfers and isomerizes the ribose moiety from AdoMet to the 7-aminomethyl group of 7-deazaguanine (preQ1-tRNA) to give epoxyqueuosine (oQ-tRNA). The protein is S-adenosylmethionine:tRNA ribosyltransferase-isomerase of Prochlorococcus marinus (strain NATL2A).